A 354-amino-acid polypeptide reads, in one-letter code: Type II restriction enzyme BanI (354 aa).

As to quaternary structure, homodimer.

The catalysed reaction is Endonucleolytic cleavage of DNA to give specific double-stranded fragments with terminal 5'-phosphates.. In terms of biological role, a P subtype restriction enzyme that recognizes the double-stranded sequence 5'-GGYRCC-3' and cleaves after G-1. This is Type II restriction enzyme BanI (banIR) from Aneurinibacillus aneurinilyticus (Bacillus aneurinolyticus).